A 112-amino-acid polypeptide reads, in one-letter code: Mu-ctenitoxin-Pn1a (112 aa).

Residues 1–19 (MKLLGIFLVASFAFVLSFG) form the signal peptide. A propeptide spanning residues 20–33 (EEMIEGENPLEDQR) is cleaved from the precursor. 7 disulfides stabilise this stretch: Cys-39–Cys-56, Cys-46–Cys-62, Cys-53–Cys-85, Cys-55–Cys-73, Cys-64–Cys-71, Cys-91–Cys-106, and Cys-102–Cys-110. Gly-111 carries the glycine amide modification.

It belongs to the neurotoxin 04 (omega-agtx) family. 02 (Tx1) subfamily. Contains 7 disulfide bonds. In terms of tissue distribution, expressed by the venom gland.

The protein resides in the secreted. Functionally, reversible inhibitor of neuronal sodium channels (Nav1.2/ SCN2A) that binds in proximity to site 1 and displays increasing affinity as the membrane potential is depolarized. Induces excitatory symptoms and spastic paralysis in mice. The sequence is that of Mu-ctenitoxin-Pn1a from Phoneutria nigriventer (Brazilian armed spider).